The primary structure comprises 339 residues: Type IV secretion system protein PtlH homolog (339 aa).

This sequence belongs to the GSP E family.

The chain is Type IV secretion system protein PtlH homolog (ptlH) from Bordetella parapertussis (strain 12822 / ATCC BAA-587 / NCTC 13253).